A 79-amino-acid chain; its full sequence is Pigment-dispersing hormone type 1 (79 aa).

The signal sequence occupies residues 1 to 22 (MRSAVVVALLVMVAMSLQLTAA). Alanine 76 carries the post-translational modification Alanine amide.

Belongs to the arthropod PDH family. As to expression, eyestalk.

Its subcellular location is the secreted. In terms of biological role, the pigment-dispersing hormone causes the migration of the distal retinal pigment into the proximal end of the pigment chromatophore cells and thus decreases the amount of light entering the retinulas. May also function as a neurotransmitter and/or neuromodulator. The protein is Pigment-dispersing hormone type 1 (PDH1) of Penaeus vannamei (Whiteleg shrimp).